The primary structure comprises 182 residues: Transcription termination/antitermination protein NusG (182 aa).

It belongs to the NusG family.

Functionally, participates in transcription elongation, termination and antitermination. The polypeptide is Transcription termination/antitermination protein NusG (Chlamydia muridarum (strain MoPn / Nigg)).